A 145-amino-acid polypeptide reads, in one-letter code: 3-dehydroquinate dehydratase (145 aa).

Residue Y23 is the Proton acceptor of the active site. The substrate site is built by N73, H79, and D86. Catalysis depends on H99, which acts as the Proton donor. Substrate is bound by residues 100–101 (LS) and R110.

The protein belongs to the type-II 3-dehydroquinase family. In terms of assembly, homododecamer.

The catalysed reaction is 3-dehydroquinate = 3-dehydroshikimate + H2O. It participates in metabolic intermediate biosynthesis; chorismate biosynthesis; chorismate from D-erythrose 4-phosphate and phosphoenolpyruvate: step 3/7. In terms of biological role, catalyzes a trans-dehydration via an enolate intermediate. The sequence is that of 3-dehydroquinate dehydratase from Desulfitobacterium hafniense (strain Y51).